The sequence spans 225 residues: LHFPL tetraspan subfamily member 2a protein (225 aa).

The next 4 helical transmembrane spans lie at 11–31, 99–119, 129–149, and 178–198; these read MLWTLLSIVAAFSELIAFLST, IFLAAGILLLCAVAFISIFTM, IFNVCGLLQAIAGLFLIVGLV, and AGWAFYTALAGTVLCFLCAVF.

Belongs to the LHFP family.

It is found in the membrane. Functionally, plays a role in fertility. Involved in distal reproductive tract development. This is LHFPL tetraspan subfamily member 2a protein from Danio rerio (Zebrafish).